A 183-amino-acid chain; its full sequence is Bifunctional protein PyrR (183 aa).

Residues 42–43, arginine 87, 104–112, arginine 137, and valine 161 each bind substrate; these read TR and DDVLYTGRT. The short motif at 100-112 is the PRPP-binding element; that stretch reads VILVDDVLYTGRT.

Belongs to the purine/pyrimidine phosphoribosyltransferase family. PyrR subfamily.

The enzyme catalyses UMP + diphosphate = 5-phospho-alpha-D-ribose 1-diphosphate + uracil. Its function is as follows. Regulates the transcription of the pyrimidine nucleotide (pyr) operon in response to exogenous pyrimidines. Also displays a weak uracil phosphoribosyltransferase activity which is not physiologically significant. This chain is Bifunctional protein PyrR, found in Deinococcus radiodurans (strain ATCC 13939 / DSM 20539 / JCM 16871 / CCUG 27074 / LMG 4051 / NBRC 15346 / NCIMB 9279 / VKM B-1422 / R1).